We begin with the raw amino-acid sequence, 360 residues long: Chorismate synthase (360 aa).

Residues 36 to 60 (LSEDDIQPDLDRRKPGTSKYTTPRR) are disordered. Residue arginine 48 coordinates NADP(+). FMN is bound by residues 125–127 (RSS), 246–247 (NA), glycine 286, 301–305 (KPTSS), and arginine 327.

It belongs to the chorismate synthase family. Homotetramer. Requires FMNH2 as cofactor.

It carries out the reaction 5-O-(1-carboxyvinyl)-3-phosphoshikimate = chorismate + phosphate. Its pathway is metabolic intermediate biosynthesis; chorismate biosynthesis; chorismate from D-erythrose 4-phosphate and phosphoenolpyruvate: step 7/7. Its function is as follows. Catalyzes the anti-1,4-elimination of the C-3 phosphate and the C-6 proR hydrogen from 5-enolpyruvylshikimate-3-phosphate (EPSP) to yield chorismate, which is the branch point compound that serves as the starting substrate for the three terminal pathways of aromatic amino acid biosynthesis. This reaction introduces a second double bond into the aromatic ring system. The chain is Chorismate synthase from Histophilus somni (strain 129Pt) (Haemophilus somnus).